A 337-amino-acid chain; its full sequence is Ketol-acid reductoisomerase (NADP(+)) (337 aa).

One can recognise a KARI N-terminal Rossmann domain in the interval 3 to 183; the sequence is VEMFYDDDAD…GGTRAGVIKT (181 aa). NADP(+) is bound by residues 26-29, Lys49, Ser52, Ser54, and 84-87; these read YGSQ and DTAQ. His109 is an active-site residue. Gly135 contributes to the NADP(+) binding site. The KARI C-terminal knotted domain occupies 184 to 329; sequence TFKEETETDL…KKLRDLMSWV (146 aa). Residues Asp192, Glu196, Glu228, and Glu232 each contribute to the Mg(2+) site. Position 253 (Ser253) interacts with substrate.

The protein belongs to the ketol-acid reductoisomerase family. It depends on Mg(2+) as a cofactor.

It catalyses the reaction (2R)-2,3-dihydroxy-3-methylbutanoate + NADP(+) = (2S)-2-acetolactate + NADPH + H(+). The enzyme catalyses (2R,3R)-2,3-dihydroxy-3-methylpentanoate + NADP(+) = (S)-2-ethyl-2-hydroxy-3-oxobutanoate + NADPH + H(+). It participates in amino-acid biosynthesis; L-isoleucine biosynthesis; L-isoleucine from 2-oxobutanoate: step 2/4. It functions in the pathway amino-acid biosynthesis; L-valine biosynthesis; L-valine from pyruvate: step 2/4. In terms of biological role, involved in the biosynthesis of branched-chain amino acids (BCAA). Catalyzes an alkyl-migration followed by a ketol-acid reduction of (S)-2-acetolactate (S2AL) to yield (R)-2,3-dihydroxy-isovalerate. In the isomerase reaction, S2AL is rearranged via a Mg-dependent methyl migration to produce 3-hydroxy-3-methyl-2-ketobutyrate (HMKB). In the reductase reaction, this 2-ketoacid undergoes a metal-dependent reduction by NADPH to yield (R)-2,3-dihydroxy-isovalerate. This chain is Ketol-acid reductoisomerase (NADP(+)), found in Rhodococcus erythropolis (strain PR4 / NBRC 100887).